Here is a 354-residue protein sequence, read N- to C-terminus: 4-hydroxy-2-oxovalerate aldolase 5 (354 aa).

Positions 11 to 263 (VTVHDMCLRD…ETGCDLFKLM (253 aa)) constitute a Pyruvate carboxyltransferase domain. Residue 19-20 (RD) participates in substrate binding. Mn(2+) is bound at residue aspartate 20. Histidine 23 acts as the Proton acceptor in catalysis. Serine 173 and histidine 202 together coordinate substrate. Mn(2+) is bound by residues histidine 202 and histidine 204. Tyrosine 293 contributes to the substrate binding site.

Belongs to the 4-hydroxy-2-oxovalerate aldolase family.

The catalysed reaction is (S)-4-hydroxy-2-oxopentanoate = acetaldehyde + pyruvate. The protein is 4-hydroxy-2-oxovalerate aldolase 5 of Dechloromonas aromatica (strain RCB).